Reading from the N-terminus, the 417-residue chain is MAEYKNYTLNFGPVHPAAHGVLRLILELDGENVVRADPHVGLLHRGTEKLAEFKPYNQSIGYMDRLDYVSMMCNEHAYVMAIEKLLQLEVPERAKYIRVMFAEMTRILNHLLWVAACGIDLGAMTVFLYAFRVREDLFDCYEAVSGARMHAAYFRPGGVARDLPTQMPQYQKTRFTSKRKAKKLNEPRQGSMLDFLDHFVVDFEKSLDEIDTLLTDNRLWKQRTVDIGTVTAERAKELGFTGPMLRGSGVAWDLRKTQPYEVYHKLEFDIPIGANGDCYDRYLVRMAEMRESNKLIKQCVDWLRANPGSVLSDNHKVAPPKRNAMKNNMEELIHHFKLFSEGYCTTEGEVYVGTEHPKGEFGVYIKSDGANKPYRLKMRAPGFAHISAMDELLSGHMLADTPAIISTIDVVFGDVDR.

Belongs to the complex I 49 kDa subunit family. As to quaternary structure, NDH-1 is composed of 14 different subunits. Subunits NuoB, C, D, E, F, and G constitute the peripheral sector of the complex.

The protein resides in the cell inner membrane. The catalysed reaction is a quinone + NADH + 5 H(+)(in) = a quinol + NAD(+) + 4 H(+)(out). In terms of biological role, NDH-1 shuttles electrons from NADH, via FMN and iron-sulfur (Fe-S) centers, to quinones in the respiratory chain. The immediate electron acceptor for the enzyme in this species is believed to be ubiquinone. Couples the redox reaction to proton translocation (for every two electrons transferred, four hydrogen ions are translocated across the cytoplasmic membrane), and thus conserves the redox energy in a proton gradient. In Francisella tularensis subsp. holarctica (strain FTNF002-00 / FTA), this protein is NADH-quinone oxidoreductase subunit D.